A 706-amino-acid polypeptide reads, in one-letter code: Polyribonucleotide nucleotidyltransferase (706 aa).

Mg(2+)-binding residues include D487 and D493. The KH domain maps to 554–613 (PRIHTMKISSDKIKDVIGKGGAVIRALCEETGTTIEIEDDGTIKIAATEGAAAKEAIRRI). The 69-residue stretch at 623 to 691 (GRIYQGKVAR…RQGRVRLSMK (69 aa)) folds into the S1 motif domain.

The protein belongs to the polyribonucleotide nucleotidyltransferase family. As to quaternary structure, component of the RNA degradosome, which is a multiprotein complex involved in RNA processing and mRNA degradation. The cofactor is Mg(2+).

The protein localises to the cytoplasm. The enzyme catalyses RNA(n+1) + phosphate = RNA(n) + a ribonucleoside 5'-diphosphate. Involved in mRNA degradation. Catalyzes the phosphorolysis of single-stranded polyribonucleotides processively in the 3'- to 5'-direction. This is Polyribonucleotide nucleotidyltransferase from Vibrio atlanticus (strain LGP32) (Vibrio splendidus (strain Mel32)).